The sequence spans 291 residues: MEMO1 family protein PH1626 (291 aa).

It belongs to the MEMO1 family.

The sequence is that of MEMO1 family protein PH1626 from Pyrococcus horikoshii (strain ATCC 700860 / DSM 12428 / JCM 9974 / NBRC 100139 / OT-3).